A 491-amino-acid polypeptide reads, in one-letter code: Myocilin (491 aa).

Residues 1 to 18 form the signal peptide; sequence MPAVQLLLLACPVWDVGA. The N-linked (GlcNAc...) asparagine glycan is linked to asparagine 43. Positions 98–171 form a coiled coil; it reads QETPEGLQRE…QEVARLRRGQ (74 aa). The segment at 151–189 is disordered; that stretch reads ENLARRLESSSQEVARLRRGQCPQTRDTARDVPPGSREV. The 260-residue stretch at 231 to 490 folds into the Olfactomedin-like domain; sequence GCGELVWVGE…MVTYDIKLSK (260 aa). A disulfide bond links cysteine 232 and cysteine 420. Positions 367, 415, 416, 464, and 465 each coordinate Ca(2+).

Homodimer (via N-terminus). Can also form higher oligomers. Interacts with OLFM3, FN1, NRCAM, GLDN and NFASC. Interacts (via N-terminus) with MYL2. Interacts with SFRP1, FRZB, FZD7, FZD10, FZD1 and WIF1; regulates Wnt signaling. Interacts with SNTA1; regulates muscle hypertrophy. Interacts with ERBB2 and ERBB3; activates ERBB2-ERBB3 signaling pathway. Interacts with SNCG; affects its secretion and its aggregation. Palmitoylated. In terms of processing, undergoes a calcium-dependent proteolytic cleavage at Arg-213 by CAPN2 in the endoplasmic reticulum. The result is the production of two fragments, one of 35 kDa containing the C-terminal olfactomedin-like domain, and another of 20 kDa containing the N-terminal leucine zipper-like domain. Post-translationally, glycosylated.

It is found in the secreted. The protein localises to the golgi apparatus. Its subcellular location is the cytoplasmic vesicle. It localises to the extracellular space. The protein resides in the extracellular matrix. It is found in the extracellular exosome. The protein localises to the mitochondrion. Its subcellular location is the mitochondrion intermembrane space. It localises to the mitochondrion inner membrane. The protein resides in the mitochondrion outer membrane. It is found in the rough endoplasmic reticulum. The protein localises to the cell projection. Its subcellular location is the cilium. It localises to the endoplasmic reticulum. Functionally, secreted glycoprotein regulating the activation of different signaling pathways in adjacent cells to control different processes including cell adhesion, cell-matrix adhesion, cytoskeleton organization and cell migration. Promotes substrate adhesion, spreading and formation of focal contacts. Negatively regulates cell-matrix adhesion and stress fiber assembly through Rho protein signal transduction. Modulates the organization of actin cytoskeleton by stimulating the formation of stress fibers through interactions with components of Wnt signaling pathways. Promotes cell migration through activation of PTK2 and the downstream phosphatidylinositol 3-kinase signaling. Plays a role in bone formation and promotes osteoblast differentiation in a dose-dependent manner through mitogen-activated protein kinase signaling. Mediates myelination in the peripheral nervous system through ERBB2/ERBB3 signaling. Plays a role as a regulator of muscle hypertrophy through the components of dystrophin-associated protein complex. Involved in positive regulation of mitochondrial depolarization. Plays a role in neurite outgrowth. May participate in the obstruction of fluid outflow in the trabecular meshwork. The chain is Myocilin (MYOC) from Macaca fascicularis (Crab-eating macaque).